The following is a 377-amino-acid chain: D-alanine--D-alanine ligase (377 aa).

Positions 140-349 (KELLTVNNIR…NVELVDKLID (210 aa)) constitute an ATP-grasp domain. ATP is bound at residue 170 to 225 (VKDLGDVVFVKAANQGSSVGVSRAKTADEFEAALTDSFQYDYKVLIEAAVKGPREL). The Mg(2+) site is built by aspartate 303, glutamate 316, and asparagine 318.

Belongs to the D-alanine--D-alanine ligase family. The cofactor is Mg(2+). Mn(2+) is required as a cofactor.

It localises to the cytoplasm. The catalysed reaction is 2 D-alanine + ATP = D-alanyl-D-alanine + ADP + phosphate + H(+). Its pathway is cell wall biogenesis; peptidoglycan biosynthesis. Functionally, cell wall formation. This chain is D-alanine--D-alanine ligase, found in Leuconostoc citreum (strain KM20).